Here is a 453-residue protein sequence, read N- to C-terminus: Bifunctional protein GlmU (453 aa).

Positions 1-226 (MLDILILAAG…IQEVEGINNR (226 aa)) are pyrophosphorylase. Residues 7 to 10 (LAAG), Lys21, Gln72, 77 to 78 (GT), 99 to 101 (YGD), Gly136, Glu151, Asn166, and Asn224 contribute to the UDP-N-acetyl-alpha-D-glucosamine site. Asp101 contacts Mg(2+). Asn224 contributes to the Mg(2+) binding site. Positions 227-247 (QQQATLERYYQQQQARALMDA) are linker. An N-acetyltransferase region spans residues 248 to 453 (GVTLLDPARF…QGWERPTRKS (206 aa)). UDP-N-acetyl-alpha-D-glucosamine-binding residues include Arg330 and Lys348. The active-site Proton acceptor is His360. Tyr363 and Asn374 together coordinate UDP-N-acetyl-alpha-D-glucosamine. Residues Ala377, 383 to 384 (NY), Ser402, Ala420, and Arg437 contribute to the acetyl-CoA site.

This sequence in the N-terminal section; belongs to the N-acetylglucosamine-1-phosphate uridyltransferase family. It in the C-terminal section; belongs to the transferase hexapeptide repeat family. Homotrimer. Mg(2+) is required as a cofactor.

The protein localises to the cytoplasm. The catalysed reaction is alpha-D-glucosamine 1-phosphate + acetyl-CoA = N-acetyl-alpha-D-glucosamine 1-phosphate + CoA + H(+). The enzyme catalyses N-acetyl-alpha-D-glucosamine 1-phosphate + UTP + H(+) = UDP-N-acetyl-alpha-D-glucosamine + diphosphate. Its pathway is nucleotide-sugar biosynthesis; UDP-N-acetyl-alpha-D-glucosamine biosynthesis; N-acetyl-alpha-D-glucosamine 1-phosphate from alpha-D-glucosamine 6-phosphate (route II): step 2/2. It functions in the pathway nucleotide-sugar biosynthesis; UDP-N-acetyl-alpha-D-glucosamine biosynthesis; UDP-N-acetyl-alpha-D-glucosamine from N-acetyl-alpha-D-glucosamine 1-phosphate: step 1/1. It participates in bacterial outer membrane biogenesis; LPS lipid A biosynthesis. Catalyzes the last two sequential reactions in the de novo biosynthetic pathway for UDP-N-acetylglucosamine (UDP-GlcNAc). The C-terminal domain catalyzes the transfer of acetyl group from acetyl coenzyme A to glucosamine-1-phosphate (GlcN-1-P) to produce N-acetylglucosamine-1-phosphate (GlcNAc-1-P), which is converted into UDP-GlcNAc by the transfer of uridine 5-monophosphate (from uridine 5-triphosphate), a reaction catalyzed by the N-terminal domain. The protein is Bifunctional protein GlmU of Cellvibrio japonicus (strain Ueda107) (Pseudomonas fluorescens subsp. cellulosa).